Reading from the N-terminus, the 274-residue chain is Probable endonuclease LCL3 (274 aa).

A helical transmembrane segment spans residues 15–32 (AVLSIILTGSTLTLIYTY). The TNase-like domain occupies 53-261 (HWLYGKVTSV…RSRKKGLWIQ (209 aa)). The active site involves Arg151. Asp156 is a Ca(2+) binding site. Active-site residues include Glu159 and Arg199.

Belongs to the LCL3 family.

Its subcellular location is the mitochondrion. The protein localises to the membrane. This Saccharomyces cerevisiae (strain RM11-1a) (Baker's yeast) protein is Probable endonuclease LCL3 (LCL3).